The primary structure comprises 412 residues: UV DNA damage endonuclease (412 aa).

The protein belongs to the uve1/UvsE family.

Functionally, component in a DNA repair pathway. Removal of UV LIGHT damaged nucleotides. Recognizes pyrimidine dimers and cleave a phosphodiester bond immediately 5' to the lesion. The polypeptide is UV DNA damage endonuclease (Clostridium perfringens (strain 13 / Type A)).